The following is a 435-amino-acid chain: 3-ketoacyl-CoA thiolase (435 aa).

Catalysis depends on cysteine 98, which acts as the Acyl-thioester intermediate. Active-site proton acceptor residues include histidine 391 and cysteine 421.

This sequence belongs to the thiolase-like superfamily. Thiolase family. As to quaternary structure, heterotetramer of two alpha chains (FadJ) and two beta chains (FadI).

Its subcellular location is the cytoplasm. It catalyses the reaction an acyl-CoA + acetyl-CoA = a 3-oxoacyl-CoA + CoA. It participates in lipid metabolism; fatty acid beta-oxidation. In terms of biological role, catalyzes the final step of fatty acid oxidation in which acetyl-CoA is released and the CoA ester of a fatty acid two carbons shorter is formed. The sequence is that of 3-ketoacyl-CoA thiolase from Colwellia psychrerythraea (strain 34H / ATCC BAA-681) (Vibrio psychroerythus).